A 504-amino-acid polypeptide reads, in one-letter code: Chorion-specific transcription factor GCMb (504 aa).

The GCM DNA-binding region spans 19 to 174 (LTWDINDPQM…KSETEGRRSA (156 aa)). Residues cysteine 81, cysteine 87, cysteine 91, cysteine 118, cysteine 121, cysteine 130, histidine 157, and histidine 159 each contribute to the Zn(2+) site. Composition is skewed to basic and acidic residues over residues 155 to 172 (GVHD…EGRR) and 188 to 203 (RRSE…DIRG). Positions 155–203 (GVHDHPRPESKSETEGRRSALKRQMASFYQPQKRRSEEPEARSTQDIRG) are disordered. Residues 379–393 (LQTVITTTVAYQAYQ) are C-terminal conserved inhibitory domain (CCID). The interval 438-472 (ASPSGRAPLKVPGDCQAPRPTLDFPQEADPSGTDG) is disordered.

It is found in the nucleus. Functionally, transcription factor that binds specific sequences on gene promoters and activate their transcription. Through the regulation of gene transcription, may play a role in parathyroid gland development. The protein is Chorion-specific transcription factor GCMb of Mus musculus (Mouse).